The following is a 224-amino-acid chain: 7-cyano-7-deazaguanine synthase (224 aa).

10–20 (LSGGLDSATVV) provides a ligand contact to ATP. Zn(2+)-binding residues include Cys-189, Cys-199, Cys-202, and Cys-205.

This sequence belongs to the QueC family. Requires Zn(2+) as cofactor.

It carries out the reaction 7-carboxy-7-deazaguanine + NH4(+) + ATP = 7-cyano-7-deazaguanine + ADP + phosphate + H2O + H(+). It functions in the pathway purine metabolism; 7-cyano-7-deazaguanine biosynthesis. Its function is as follows. Catalyzes the ATP-dependent conversion of 7-carboxy-7-deazaguanine (CDG) to 7-cyano-7-deazaguanine (preQ(0)). This chain is 7-cyano-7-deazaguanine synthase, found in Ectopseudomonas mendocina (strain ymp) (Pseudomonas mendocina).